A 183-amino-acid chain; its full sequence is Large ribosomal subunit protein uL5 (183 aa).

Belongs to the universal ribosomal protein uL5 family. As to quaternary structure, part of the 50S ribosomal subunit; part of the 5S rRNA/L5/L18/L25 subcomplex. Contacts the 5S rRNA and the P site tRNA. Forms a bridge to the 30S subunit in the 70S ribosome.

Its function is as follows. This is one of the proteins that bind and probably mediate the attachment of the 5S RNA into the large ribosomal subunit, where it forms part of the central protuberance. In the 70S ribosome it contacts protein S13 of the 30S subunit (bridge B1b), connecting the 2 subunits; this bridge is implicated in subunit movement. Contacts the P site tRNA; the 5S rRNA and some of its associated proteins might help stabilize positioning of ribosome-bound tRNAs. This chain is Large ribosomal subunit protein uL5, found in Chlorobaculum tepidum (strain ATCC 49652 / DSM 12025 / NBRC 103806 / TLS) (Chlorobium tepidum).